The following is a 342-amino-acid chain: Farnesyl pyrophosphate synthase 2 (342 aa).

The isopentenyl diphosphate site is built by K47, R50, and Q86. Residues D93 and D97 each coordinate Mg(2+). Position 102 (R102) interacts with dimethylallyl diphosphate. Position 103 (R103) interacts with isopentenyl diphosphate. 5 residues coordinate dimethylallyl diphosphate: K190, T191, Q229, K246, and K255.

The protein belongs to the FPP/GGPP synthase family. The cofactor is Mg(2+).

It localises to the cytoplasm. The enzyme catalyses isopentenyl diphosphate + dimethylallyl diphosphate = (2E)-geranyl diphosphate + diphosphate. The catalysed reaction is isopentenyl diphosphate + (2E)-geranyl diphosphate = (2E,6E)-farnesyl diphosphate + diphosphate. Its pathway is isoprenoid biosynthesis; farnesyl diphosphate biosynthesis; farnesyl diphosphate from geranyl diphosphate and isopentenyl diphosphate: step 1/1. The protein operates within isoprenoid biosynthesis; geranyl diphosphate biosynthesis; geranyl diphosphate from dimethylallyl diphosphate and isopentenyl diphosphate: step 1/1. Catalyzes the sequential condensation of isopentenyl pyrophosphate with the allylic pyrophosphates, dimethylallyl pyrophosphate, and then with the resultant geranylpyrophosphate to the ultimate product farnesyl pyrophosphate. This chain is Farnesyl pyrophosphate synthase 2 (FPS2), found in Lupinus albus (White lupine).